A 380-amino-acid chain; its full sequence is E3 ubiquitin-protein ligase RNF13 (380 aa).

The first 34 residues, Met1–Ala34, serve as a signal peptide directing secretion. At Asp35 to Tyr182 the chain is on the lumenal side. Residues Leu64 to Asp160 enclose the PA domain. N-linked (GlcNAc...) asparagine glycosylation is present at Asn88. The helical transmembrane segment at Tyr183–Ile203 threads the bilayer. The Cytoplasmic segment spans residues Thr204–Val380. Residues Cys240–Lys282 form an RING-type; atypical zinc finger. The segment at Val285–Val380 is disordered. Residues Ser338–Glu356 are compositionally biased toward acidic residues.

In terms of assembly, interacts with ERN1. In terms of processing, autoubiquitinated.

It localises to the endoplasmic reticulum membrane. It is found in the late endosome membrane. The protein resides in the lysosome membrane. Its subcellular location is the nucleus inner membrane. It carries out the reaction S-ubiquitinyl-[E2 ubiquitin-conjugating enzyme]-L-cysteine + [acceptor protein]-L-lysine = [E2 ubiquitin-conjugating enzyme]-L-cysteine + N(6)-ubiquitinyl-[acceptor protein]-L-lysine.. The protein operates within protein modification; protein ubiquitination. In terms of biological role, E3 ubiquitin-protein ligase that regulates cell proliferation. Involved in apoptosis regulation. Mediates ER stress-induced activation of JNK signaling pathway and apoptosis by promoting ERN1 activation and splicing of XBP1 mRNA. Also involved in protein trafficking and localization. In Rattus norvegicus (Rat), this protein is E3 ubiquitin-protein ligase RNF13 (Rnf13).